Reading from the N-terminus, the 90-residue chain is Putative regulatory protein cce_4590 (90 aa).

Belongs to the RemA family.

The sequence is that of Putative regulatory protein cce_4590 from Crocosphaera subtropica (strain ATCC 51142 / BH68) (Cyanothece sp. (strain ATCC 51142)).